The sequence spans 102 residues: Plastocyanin (102 aa).

A Plastocyanin-like domain is found at 1–102 (AKVEVGDEVG…ANMKGTLTVK (102 aa)). The Cu cation site is built by histidine 37, cysteine 87, histidine 90, and methionine 95.

This sequence belongs to the plastocyanin family. Cu(2+) is required as a cofactor.

It localises to the plastid. The protein resides in the chloroplast thylakoid membrane. Functionally, participates in electron transfer between P700 and the cytochrome b6-f complex in photosystem I. This is Plastocyanin (PETE) from Dryopteris crassirhizoma (Thick stemmed wood fern).